Reading from the N-terminus, the 157-residue chain is Large ribosomal subunit protein uL11 (157 aa).

2 disordered regions span residues 1–28 (MAGT…GPTP) and 138–157 (NNPR…DILK). Over residues 139 to 157 (NPREFKSRMEDGEYDDILK) the composition is skewed to basic and acidic residues.

Belongs to the universal ribosomal protein uL11 family. In terms of assembly, part of the ribosomal stalk of the 50S ribosomal subunit. Interacts with L10 and the large rRNA to form the base of the stalk. L10 forms an elongated spine to which L12 dimers bind in a sequential fashion forming a multimeric L10(L12)X complex.

Its function is as follows. Forms part of the ribosomal stalk which helps the ribosome interact with GTP-bound translation factors. This is Large ribosomal subunit protein uL11 from Haloquadratum walsbyi (strain DSM 16790 / HBSQ001).